A 92-amino-acid polypeptide reads, in one-letter code: MEVKTFAFLQIAVLIALGLHLAPAGSNQLSGPQSSANSNEAVFCDTNCTQGTDEAWSGCRGDCFCVYVGNSTEGRCMMLSGDFDYSTPGAED.

Positions 1–26 (MEVKTFAFLQIAVLIALGLHLAPAGS) are cleaved as a signal peptide. 3 cysteine pairs are disulfide-bonded: Cys-44–Cys-63, Cys-48–Cys-65, and Cys-59–Cys-76. Asn-47 carries N-linked (GlcNAc...) asparagine glycosylation. A glycan (N-linked (GlcNAc...) asparagine) is linked at Asn-70.

The protein resides in the secreted. Its function is as follows. Salivary chemokine-binding protein which binds to host chemokines CXCL1, CXCL2, CXCL3, CXCL4, CXCL5, CXCL6, CXCL10, CXCL11 and CXCL13. The protein is Evasin P942 of Ixodes ricinus (Common tick).